The primary structure comprises 422 residues: Protein krasavietz (422 aa).

The tract at residues 1 to 26 is disordered; the sequence is MSQKTERPVLSGQRIKTRKRDEREKY. The region spanning 244–415 is the W2 domain; the sequence is KLHKAQASQE…QSAEEESESE (172 aa). Ser407, Ser412, and Ser414 each carry phosphoserine.

This sequence belongs to the BZW family. In terms of tissue distribution, expressed in mushroom bodies.

May be involved in memory formation. The protein is Protein krasavietz (kra) of Drosophila melanogaster (Fruit fly).